Here is a 241-residue protein sequence, read N- to C-terminus: Peptidoglycan endopeptidase RipB (241 aa).

The N-terminal stretch at methionine 1 to alanine 31 is a signal peptide. The 133-residue stretch at arginine 109–tyrosine 241 folds into the NlpC/P60 domain. Catalysis depends on cysteine 152, which acts as the Nucleophile. Histidine 201 serves as the catalytic Proton acceptor. The active site involves glutamate 213.

It belongs to the peptidase C40 family. In terms of assembly, monomer.

Peptidoglycan endopeptidase that cleaves the bond between D-glutamate and meso-diaminopimelate. Binds high-molecular weight peptidoglycan, but does not degrade it. Required for normal separation of daughter cells after cell division and cell wall integrity. Required for host cell invasion. This is Peptidoglycan endopeptidase RipB (ripB) from Mycobacterium tuberculosis (strain CDC 1551 / Oshkosh).